The sequence spans 316 residues: MGILKDGNHTAVTEFILLGLTDDPVLKVVLFTIILCIYLVTVSGNLSTILLIRVSSQLHHPMYFFLSHLASVDIGISSSVTPNMLVNFLLERSTISYLGCGIQLGSGAFFGSTESFLLAAMAYDHFMAICNPLLYSTKMSTQVCIQLLVGSYIGGFLNASSFILSFFSFLFCGPNKVNHFFCDFTPLVELSCSDNSVLLILDSFSAGSIIVITVLVIAISYTYILITILKMHSTEGRHKAFSTCTSHLTAVTVFYGTVTFIYVMPKSSYSTDQNKVLSVFYMIAIAIPMLNPLIYSLRNNEIKNALKRQLSKKTFS.

Residues Met-1–Val-28 are Extracellular-facing. Asn-8 is a glycosylation site (N-linked (GlcNAc...) asparagine). The helical transmembrane segment at Val-29–Ile-49 threads the bilayer. Residues Leu-50 to Gln-57 are Cytoplasmic-facing. A helical transmembrane segment spans residues Leu-58–Ser-78. The Extracellular segment spans residues Ser-79 to Ile-102. A disulfide bridge connects residues Cys-100 and Cys-192. Residues Gln-103 to Tyr-123 traverse the membrane as a helical segment. The Cytoplasmic segment spans residues Asp-124–Ser-136. A helical membrane pass occupies residues Thr-137–Leu-157. Residues Asn-158–Leu-199 are Extracellular-facing. Residues Ile-200–Ser-220 form a helical membrane-spanning segment. Residues Tyr-221–Ala-240 lie on the Cytoplasmic side of the membrane. A helical membrane pass occupies residues Phe-241 to Ile-261. At Tyr-262–Asn-274 the chain is on the extracellular side. A helical membrane pass occupies residues Lys-275–Leu-297. Residues Arg-298–Ser-316 lie on the Cytoplasmic side of the membrane.

Belongs to the G-protein coupled receptor 1 family.

It localises to the cell membrane. Functionally, potential odorant receptor. In Mus musculus (Mouse), this protein is Olfactory receptor 5P79.